The chain runs to 201 residues: Small ribosomal subunit protein uS5 (201 aa).

Residues methionine 1–aspartate 28 form a disordered region. An S5 DRBM domain is found at leucine 31 to valine 94. Residues serine 173–alanine 201 form a disordered region.

The protein belongs to the universal ribosomal protein uS5 family. As to quaternary structure, part of the 30S ribosomal subunit. Contacts proteins S4 and S8.

With S4 and S12 plays an important role in translational accuracy. Functionally, located at the back of the 30S subunit body where it stabilizes the conformation of the head with respect to the body. The sequence is that of Small ribosomal subunit protein uS5 from Maricaulis maris (strain MCS10) (Caulobacter maris).